The chain runs to 876 residues: DNA mismatch repair protein MutS (876 aa).

ATP is bound at residue 628–635 (GPNMAGKS).

Belongs to the DNA mismatch repair MutS family.

Its function is as follows. This protein is involved in the repair of mismatches in DNA. It is possible that it carries out the mismatch recognition step. This protein has a weak ATPase activity. This Chlorobaculum parvum (strain DSM 263 / NCIMB 8327) (Chlorobium vibrioforme subsp. thiosulfatophilum) protein is DNA mismatch repair protein MutS.